The following is a 351-amino-acid chain: uncharacterized protein (351 aa).

An N-terminal signal peptide occupies residues 1–27 (MKNKKRVLIASSLSCAILLLSAATTQA). Residues 29–71 (SAHKDSQDQNKKEHVDKSQQKDKRNVTNKDKNSTVPDDIGKNG) form a disordered region. The segment covering 30-60 (AHKDSQDQNKKEHVDKSQQKDKRNVTNKDKN) has biased composition (basic and acidic residues).

It belongs to the aerolysin family.

This is an uncharacterized protein from Staphylococcus aureus (strain Mu50 / ATCC 700699).